Here is a 285-residue protein sequence, read N- to C-terminus: MKLCGFEVGLNQPLFLIAGPCVIESEQLQMDTAGTLKEITASLGIAFIFKSSFDKANRSSGSTFRGPGIERGLEILAKVKRELGVPILTDIHSEDQIAQVASVVDVLQTPAFLCRQTDFIRAVAQSGLPVNIKKGQFLAPGDMKNVIDKARAAAREKGLNEDNFMACERGVSFGYNNLVSDMRSLAIMRDTGAPVVFDATHSVQLPGGQGTSSGGQREMVPVLARAAVAVGVAGLFMETHPDPSKALSDGPNAVPLKHMRALLETLVALDAVTKKNGFLENSFAA.

This sequence belongs to the KdsA family.

The protein resides in the cytoplasm. The enzyme catalyses D-arabinose 5-phosphate + phosphoenolpyruvate + H2O = 3-deoxy-alpha-D-manno-2-octulosonate-8-phosphate + phosphate. It functions in the pathway carbohydrate biosynthesis; 3-deoxy-D-manno-octulosonate biosynthesis; 3-deoxy-D-manno-octulosonate from D-ribulose 5-phosphate: step 2/3. The protein operates within bacterial outer membrane biogenesis; lipopolysaccharide biosynthesis. The protein is 2-dehydro-3-deoxyphosphooctonate aldolase of Albidiferax ferrireducens (strain ATCC BAA-621 / DSM 15236 / T118) (Rhodoferax ferrireducens).